Reading from the N-terminus, the 241-residue chain is B-cell receptor-associated protein 29 (241 aa).

Topologically, residues 1-6 (MTLQWA) are lumenal. Residues 7–27 (AVATFLYAEIGLILIFCLPFI) form a helical membrane-spanning segment. The Cytoplasmic portion of the chain corresponds to 28-43 (PPQRWQKIFSFNVWGK). Residues 44-64 (IATFWNKAFLTIIILLIVLFL) traverse the membrane as a helical segment. The Lumenal portion of the chain corresponds to 65 to 103 (DAVREVRKYSSVHTIEKSSTSRPDAYEHTQMKLFRSQRN). Residues 104-124 (LYISGFSLFFWLVLRRLVTLI) traverse the membrane as a helical segment. Residues 125–241 (TQLAKELSNK…RLERGNKKRL (117 aa)) lie on the Cytoplasmic side of the membrane. Residues 166–233 (GKDEECVLEA…KEHSELQDRL (68 aa)) are a coiled coil. The interval 198-223 (LSKAQNDVMEMKMQSERLSKEYDQLL) is disordered. A compositionally biased stretch (basic and acidic residues) spans 206 to 223 (MEMKMQSERLSKEYDQLL). The short motif at 238–241 (KKRL) is the Di-lysine motif element.

Belongs to the BCAP29/BCAP31 family. As to quaternary structure, homodimer. Heterodimer with BCAP31. Binds CASP8 (isoform 9) as a complex containing BCAP31, BCAP29, BCL2 and/or BCL2L1. Interacts with VAMP3, VAMP1 and membrane IgD immunoglobulins. May interact with ACTG1 and non-muscle myosin II.

Its subcellular location is the endoplasmic reticulum membrane. Functionally, may play a role in anterograde transport of membrane proteins from the endoplasmic reticulum to the Golgi. May be involved in CASP8-mediated apoptosis. This is B-cell receptor-associated protein 29 (BCAP29) from Homo sapiens (Human).